The primary structure comprises 177 residues: O-acetyl-ADP-ribose deacetylase (177 aa).

The Macro domain occupies 1–175 (MKSRIHVLQG…LYNRLLTQQG (175 aa)). Substrate contacts are provided by residues 11–12 (DI), Asn25, 33–35 (GVD), and 122–126 (STGVY). Catalysis depends on Asp35, which acts as the Proton acceptor.

Belongs to the MacroD-type family. YmdB subfamily. As to quaternary structure, homodimer. Interacts with RNase III.

It carries out the reaction 3''-O-acetyl-ADP-D-ribose + H2O = ADP-D-ribose + acetate + H(+). It catalyses the reaction 2''-O-acetyl-ADP-D-ribose + H2O = ADP-D-ribose + acetate + H(+). Deacetylates O-acetyl-ADP ribose to yield ADP-ribose and free acetate. Down-regulates ribonuclease 3 (RNase III) activity. Acts by interacting directly with the region of the ribonuclease that is required for dimerization/activation. The sequence is that of O-acetyl-ADP-ribose deacetylase from Escherichia fergusonii (strain ATCC 35469 / DSM 13698 / CCUG 18766 / IAM 14443 / JCM 21226 / LMG 7866 / NBRC 102419 / NCTC 12128 / CDC 0568-73).